The following is a 100-amino-acid chain: Urease subunit gamma (100 aa).

This sequence belongs to the urease gamma subunit family. In terms of assembly, heterotrimer of UreA (gamma), UreB (beta) and UreC (alpha) subunits. Three heterotrimers associate to form the active enzyme.

The protein resides in the cytoplasm. The enzyme catalyses urea + 2 H2O + H(+) = hydrogencarbonate + 2 NH4(+). It functions in the pathway nitrogen metabolism; urea degradation; CO(2) and NH(3) from urea (urease route): step 1/1. This chain is Urease subunit gamma, found in Streptomyces avermitilis (strain ATCC 31267 / DSM 46492 / JCM 5070 / NBRC 14893 / NCIMB 12804 / NRRL 8165 / MA-4680).